The following is a 912-amino-acid chain: Protein transport protein SEC24-2 (912 aa).

Over residues 1 to 11 (MSNPSRPKKRV) the composition is skewed to basic residues. 2 disordered regions span residues 1-83 (MSNP…QQIS) and 102-129 (PNAYYQPNNGNNIQPTGENKPSLTPGRP). Polar residues-rich tracts occupy residues 33–45 (SGQTMQSQVSGSA), 53–74 (GQFTQPMNASDAQNQPQFMTPA), and 106–129 (YQPNNGNNIQPTGENKPSLTPGRP). Cys226, Cys229, Cys248, and Cys251 together coordinate Zn(2+). The tract at residues 226 to 251 (CRRCRGYLNPFVKILQVESKWRCNFC) is zinc finger-like.

The protein belongs to the SEC23/SEC24 family. SEC24 subfamily. In terms of assembly, the COPII coat is composed of at least 5 proteins: the SEC23/24 complex, the SEC13/31 complex, and the protein SAR1. Golgi apparatus membrane; Peripheral membrane protein; Cytoplasmic side.

The protein resides in the cytoplasm. It localises to the cytoplasmic vesicle. It is found in the COPII-coated vesicle membrane. Its subcellular location is the endoplasmic reticulum membrane. The protein localises to the golgi apparatus membrane. Its function is as follows. Component of the coat protein complex II (COPII) which promotes the formation of transport vesicles from the endoplasmic reticulum (ER). The coat has two main functions, the physical deformation of the endoplasmic reticulum membrane into vesicles and the selection of cargo molecules. The sequence is that of Protein transport protein SEC24-2 (SEC242) from Naumovozyma castellii (Yeast).